Here is a 441-residue protein sequence, read N- to C-terminus: Cysteine proteinase (441 aa).

Cys-249 and Cys-290 are joined by a disulfide. Cys-252 is an active-site residue. N-linked (GlcNAc...) asparagine glycosylation is found at Asn-270 and Asn-345. Active-site residues include His-381 and Asn-403.

The protein belongs to the peptidase C1 family.

The sequence is that of Cysteine proteinase (TACP) from Theileria annulata.